Consider the following 376-residue polypeptide: MHCARYSTGTCRSCQWLEKAYPQQLSDKQQHLEGLLQPHAVQRWLPVQPSAQSAFRNKAKMVVSGSVERPLLGMLHRDGTAVDLCDCPLYPSSFASVFDVLKVFIARAGLTPYNVARRRGELKYLLLTESTQRGTFMLRFVLRSETKLAQLRAALPWLQQQLPQLEVISANIQPVHQAIMEGKTEIILSEAAALAEQFNQVPLYIRPQSFFQTNPQVAAALYATARDWVAELNITSMWDLFCGVGGFGLHCASPEMRLTGIEISAEAIACARRSAEQLGLKQVEFQALDSTQFATGKAEIPELVLVNPPRRGIGSELCTYLSRMAPDYILYSSCNAESMAKDMTELTNYRALRVQLFDMFPHTAHYEVLTLLKREI.

[4Fe-4S] cluster-binding residues include cysteine 3, cysteine 11, cysteine 14, and cysteine 87. S-adenosyl-L-methionine-binding residues include glutamine 212, phenylalanine 241, glutamate 262, and asparagine 307. Cysteine 334 (nucleophile) is an active-site residue.

Belongs to the class I-like SAM-binding methyltransferase superfamily. RNA M5U methyltransferase family. RlmC subfamily.

The catalysed reaction is uridine(747) in 23S rRNA + S-adenosyl-L-methionine = 5-methyluridine(747) in 23S rRNA + S-adenosyl-L-homocysteine + H(+). In terms of biological role, catalyzes the formation of 5-methyl-uridine at position 747 (m5U747) in 23S rRNA. This chain is 23S rRNA (uracil(747)-C(5))-methyltransferase RlmC, found in Pectobacterium carotovorum subsp. carotovorum (strain PC1).